A 156-amino-acid polypeptide reads, in one-letter code: Ribosome maturation factor RimP (156 aa).

This sequence belongs to the RimP family.

The protein resides in the cytoplasm. Functionally, required for maturation of 30S ribosomal subunits. This Microcystis aeruginosa (strain NIES-843 / IAM M-2473) protein is Ribosome maturation factor RimP.